The sequence spans 218 residues: Large ribosomal subunit protein bL25 (218 aa).

This sequence belongs to the bacterial ribosomal protein bL25 family. CTC subfamily. Part of the 50S ribosomal subunit; part of the 5S rRNA/L5/L18/L25 subcomplex. Contacts the 5S rRNA. Binds to the 5S rRNA independently of L5 and L18.

In terms of biological role, this is one of the proteins that binds to the 5S RNA in the ribosome where it forms part of the central protuberance. The chain is Large ribosomal subunit protein bL25 from Polaromonas naphthalenivorans (strain CJ2).